A 292-amino-acid chain; its full sequence is Putative rRNA 2'-O-methyltransferase fibrillarin 3 (292 aa).

The tract at residues 1–58 (MKPPQRGRGGGVRGGRGLARGGEGSAVRGSGRGGESGRGRGPGRVKSESDGGIKGGSK) is disordered. Gly residues predominate over residues 7-42 (GRGGGVRGGRGLARGGEGSAVRGSGRGGESGRGRGP). Residues 146-147 (YT), 165-166 (EH), 190-191 (DA), and 210-213 (DVNH) each bind S-adenosyl-L-methionine.

Belongs to the methyltransferase superfamily. Fibrillarin family. In terms of assembly, component of box C/D small nucleolar ribonucleoprotein (snoRNP) particles. Not detectable by RT-PCR.

It is found in the nucleus. The protein localises to the nucleolus. The catalysed reaction is L-glutaminyl-[histone H2A] + S-adenosyl-L-methionine = N(5)-methyl-L-glutaminyl-[histone H2A] + S-adenosyl-L-homocysteine + H(+). In terms of biological role, S-adenosyl-L-methionine-dependent methyltransferase that has the ability to methylate both RNAs and proteins. Involved in pre-rRNA processing. Utilizes the methyl donor S-adenosyl-L-methionine to catalyze the site-specific 2'-hydroxyl methylation of ribose moieties in pre-ribosomal RNA. Site specificity is provided by a guide RNA that base pairs with the substrate. Methylation occurs at a characteristic distance from the sequence involved in base pairing with the guide RNA. Also acts as a protein methyltransferase by mediating methylation of 'Gln-105' of histone H2A (H2AQ105me), a modification that impairs binding of the FACT complex and is specifically present at 35S ribosomal DNA locus. This chain is Putative rRNA 2'-O-methyltransferase fibrillarin 3 (FIB3), found in Arabidopsis thaliana (Mouse-ear cress).